Reading from the N-terminus, the 243-residue chain is MIAPRIALQFLTRLPVSLPGMPTPEQIGRSLLWYPAVGLLLGLLLWLAHLLLGQTPDVLQAAIILALWVGLSGGLHLDGLADTADAWVGGFGDPGRTLAIMKDPRSGPIAVVVLVLLLLLKFAALLSLLQAGQGIYLVLLPWLGRSLLPLLLATTPYVRAGGLGQALVDHLPRRQLPWVLGGHVAAMLLLGWGALIALATALALFVWLRRALMQRLGGTTGDTAGALLELAECAALLALALSL.

5 helical membrane passes run 31–51 (LLWY…AHLL), 61–81 (AAII…DGLA), 109–129 (IAVV…LSLL), 134–154 (GIYL…LLAT), and 188–208 (LLLG…FVWL).

The protein belongs to the CobS family. Requires Mg(2+) as cofactor.

The protein localises to the cell inner membrane. It carries out the reaction alpha-ribazole + adenosylcob(III)inamide-GDP = adenosylcob(III)alamin + GMP + H(+). The catalysed reaction is alpha-ribazole 5'-phosphate + adenosylcob(III)inamide-GDP = adenosylcob(III)alamin 5'-phosphate + GMP + H(+). It functions in the pathway cofactor biosynthesis; adenosylcobalamin biosynthesis; adenosylcobalamin from cob(II)yrinate a,c-diamide: step 7/7. Joins adenosylcobinamide-GDP and alpha-ribazole to generate adenosylcobalamin (Ado-cobalamin). Also synthesizes adenosylcobalamin 5'-phosphate from adenosylcobinamide-GDP and alpha-ribazole 5'-phosphate. This Ectopseudomonas mendocina (strain ymp) (Pseudomonas mendocina) protein is Adenosylcobinamide-GDP ribazoletransferase.